The chain runs to 433 residues: Serine--tRNA ligase (433 aa).

L-serine is bound at residue 235–237; the sequence is TSE. 266–268 lines the ATP pocket; that stretch reads RSE. Glu-289 is a binding site for L-serine. Position 353 to 356 (353 to 356) interacts with ATP; the sequence is EISS. Ser-388 is a binding site for L-serine.

The protein belongs to the class-II aminoacyl-tRNA synthetase family. Type-1 seryl-tRNA synthetase subfamily. Homodimer. The tRNA molecule binds across the dimer.

The protein resides in the cytoplasm. The catalysed reaction is tRNA(Ser) + L-serine + ATP = L-seryl-tRNA(Ser) + AMP + diphosphate + H(+). It catalyses the reaction tRNA(Sec) + L-serine + ATP = L-seryl-tRNA(Sec) + AMP + diphosphate + H(+). The protein operates within aminoacyl-tRNA biosynthesis; selenocysteinyl-tRNA(Sec) biosynthesis; L-seryl-tRNA(Sec) from L-serine and tRNA(Sec): step 1/1. Catalyzes the attachment of serine to tRNA(Ser). Is also able to aminoacylate tRNA(Sec) with serine, to form the misacylated tRNA L-seryl-tRNA(Sec), which will be further converted into selenocysteinyl-tRNA(Sec). This chain is Serine--tRNA ligase, found in Burkholderia cepacia (Pseudomonas cepacia).